Reading from the N-terminus, the 600-residue chain is Elongation factor 4 (600 aa).

Residues 13–194 (DRIRNFCIIA…AIVERIPPPR (182 aa)) enclose the tr-type G domain. Residues 25-30 (DHGKST) and 141-144 (NKID) contribute to the GTP site.

Belongs to the TRAFAC class translation factor GTPase superfamily. Classic translation factor GTPase family. LepA subfamily.

Its subcellular location is the cell membrane. The enzyme catalyses GTP + H2O = GDP + phosphate + H(+). Functionally, required for accurate and efficient protein synthesis under certain stress conditions. May act as a fidelity factor of the translation reaction, by catalyzing a one-codon backward translocation of tRNAs on improperly translocated ribosomes. Back-translocation proceeds from a post-translocation (POST) complex to a pre-translocation (PRE) complex, thus giving elongation factor G a second chance to translocate the tRNAs correctly. Binds to ribosomes in a GTP-dependent manner. The protein is Elongation factor 4 of Rubrobacter xylanophilus (strain DSM 9941 / JCM 11954 / NBRC 16129 / PRD-1).